Here is a 1492-residue protein sequence, read N- to C-terminus: DNA polymerase alpha catalytic subunit (1492 aa).

Disordered stretches follow at residues Asp-34–Ser-112, Ser-162–Pro-195, and Ala-210–Asn-234. Positions Tyr-42–Asp-55 are enriched in basic and acidic residues. The span at Asn-93–Pro-105 shows a compositional bias: polar residues. Residues Glu-166–Glu-178 show a composition bias toward basic and acidic residues. Polar residues-rich tracts occupy residues Ala-184–Asn-194 and Ala-210–Lys-224. Positions 1314, 1317, 1341, 1344, 1375, 1380, 1393, and 1398 each coordinate Zn(2+). A CysA-type zinc finger spans residues Cys-1314 to Cys-1344. Positions Cys-1375 to Cys-1398 match the CysB motif motif.

This sequence belongs to the DNA polymerase type-B family.

Its subcellular location is the nucleus. It catalyses the reaction DNA(n) + a 2'-deoxyribonucleoside 5'-triphosphate = DNA(n+1) + diphosphate. Functionally, polymerase alpha in a complex with DNA primase is a replicative polymerase. The protein is DNA polymerase alpha catalytic subunit of Sterkiella nova (Ciliate).